The following is a 231-amino-acid chain: Homeobox protein EMX1 (231 aa).

The segment at residues 133 to 192 (PKRIRTAFSPSQLLRLERAFEKNHYVVGAERKQLANSLSLSETQVKVWFQNRRTKYKRQK) is a DNA-binding region (homeobox). Positions 193–231 (LEEEGPECTQKKKGNHHINRWRIATKQTGSEDIDVMSDA) are disordered. Basic residues predominate over residues 203-212 (KKKGNHHINR).

This sequence belongs to the EMX homeobox family.

The protein localises to the nucleus. Functionally, may function in combinations with OTX1/2 to specify cell fates in the developing central nervous system. In Danio rerio (Zebrafish), this protein is Homeobox protein EMX1 (emx1).